The following is a 239-amino-acid chain: Myogenic factor 6 (239 aa).

The disordered stretch occupies residues Gln-27 to Glu-64. One can recognise a bHLH domain in the interval Asp-96 to Leu-147. The segment at Asp-155–Lys-184 is disordered.

As to quaternary structure, efficient DNA binding requires dimerization with another bHLH protein.

It localises to the nucleus. In terms of biological role, involved in muscle differentiation (myogenic factor). Induces fibroblasts to differentiate into myoblasts. Probable sequence specific DNA-binding protein. This is Myogenic factor 6 (myf6) from Tetraodon nigroviridis (Spotted green pufferfish).